The following is a 437-amino-acid chain: ATP-dependent protease ATPase subunit HslU (437 aa).

ATP contacts are provided by residues Val18, 60–65 (GVGKTE), Asp250, Glu315, and Arg387.

Belongs to the ClpX chaperone family. HslU subfamily. A double ring-shaped homohexamer of HslV is capped on each side by a ring-shaped HslU homohexamer. The assembly of the HslU/HslV complex is dependent on binding of ATP.

It localises to the cytoplasm. Its function is as follows. ATPase subunit of a proteasome-like degradation complex; this subunit has chaperone activity. The binding of ATP and its subsequent hydrolysis by HslU are essential for unfolding of protein substrates subsequently hydrolyzed by HslV. HslU recognizes the N-terminal part of its protein substrates and unfolds these before they are guided to HslV for hydrolysis. This chain is ATP-dependent protease ATPase subunit HslU, found in Desulfovibrio desulfuricans (strain ATCC 27774 / DSM 6949 / MB).